Reading from the N-terminus, the 425-residue chain is Enolase (425 aa).

Q162 is a (2R)-2-phosphoglycerate binding site. The active-site Proton donor is E204. Mg(2+) is bound by residues D241, E282, and D309. (2R)-2-phosphoglycerate is bound by residues K334, R363, S364, and K385. The active-site Proton acceptor is K334.

It belongs to the enolase family. Mg(2+) is required as a cofactor.

The protein resides in the cytoplasm. Its subcellular location is the secreted. The protein localises to the cell surface. The catalysed reaction is (2R)-2-phosphoglycerate = phosphoenolpyruvate + H2O. It participates in carbohydrate degradation; glycolysis; pyruvate from D-glyceraldehyde 3-phosphate: step 4/5. Its function is as follows. Catalyzes the reversible conversion of 2-phosphoglycerate (2-PG) into phosphoenolpyruvate (PEP). It is essential for the degradation of carbohydrates via glycolysis. In Corynebacterium glutamicum (strain R), this protein is Enolase.